Consider the following 181-residue polypeptide: MNMVSLPETINSPILYFLDVGILLGGLGVVFFGKIIYSALFLGVVFVCVALLYLLLNADFLAAAQILIYVGAINVLIVFAIMLINKPETKINKKKITFGDILSGFSVFGLFSFLIIMILNTTWLQPTLVSQEVKNSFQSIDIIGIHLLTDLLLPFELLSILLLVALVGAITIARKEISPKI.

The next 5 helical transmembrane spans lie at 13-33 (PILY…VFFG), 35-55 (IIYS…LYLL), 64-84 (AQIL…IMLI), 98-118 (FGDI…IIMI), and 152-172 (LLPF…AITI).

The protein belongs to the complex I subunit 6 family. As to quaternary structure, NDH is composed of at least 16 different subunits, 5 of which are encoded in the nucleus.

It localises to the plastid. The protein resides in the chloroplast thylakoid membrane. The catalysed reaction is a plastoquinone + NADH + (n+1) H(+)(in) = a plastoquinol + NAD(+) + n H(+)(out). It catalyses the reaction a plastoquinone + NADPH + (n+1) H(+)(in) = a plastoquinol + NADP(+) + n H(+)(out). In terms of biological role, NDH shuttles electrons from NAD(P)H:plastoquinone, via FMN and iron-sulfur (Fe-S) centers, to quinones in the photosynthetic chain and possibly in a chloroplast respiratory chain. The immediate electron acceptor for the enzyme in this species is believed to be plastoquinone. Couples the redox reaction to proton translocation, and thus conserves the redox energy in a proton gradient. The sequence is that of NAD(P)H-quinone oxidoreductase subunit 6, chloroplastic (ndhG) from Staurastrum punctulatum (Green alga).